We begin with the raw amino-acid sequence, 876 residues long: MKKLKASEIRQKYLDFFVEKGHMVEPSAPLVPIDDDTLLWINSGVATLKKYFDGRETPKKPRIVNSQKAIRTNDIENVGFTARHHTFFEMLGNFSIGDYFKQEAIEFAWEFLTSDKWMGMEPDKLYVTIHPEDMEAYNIWHKDIGLEESRIIRIEGNFWDIGEGPSGPNTEIFYDRGEAYGQDDPAEEMYPGGENERYLEVWNLVFSEFNHNKDHSYTPLPNKNIDTGMGLERMASVSQNVRTNYETDLFMPIMNEIEKVSGKQYLVNNEQDVAFKVIADHIRTIAFAISDGALPANEGRGYVLRRLLRRAVRFSQTLGINEPFMYKLVDIVADIMEPYYPNVKEKADFIKRVIKSEEERFHETLEDGLAILNELIKKAKATTNEINGKDAFKLYDTYGFPIELTEEIAVQAGLKVDMTTFESEMQQQRDRARQARQNSQSMQVQSEVLKNITSASTFVGYDTATAQTTLTHLIYNGEEVSQVEAGETVYFMLTETPFYAVSGGQVADTGIVYNDNFEIAVSEVTKAPNGQNLHKGVVQFGQVNVGATVSAEVNQNDRRDIQKNHSATHLLHAALKSVLGDHVNQAGSLVEADRLRFDFSHFGPMTNDEIDQVERLVNEEIWKGIDVNIQEMDIVSAKEMGAMALFGEKYGDVVRVVNMAPFSIELCGGIHVRNTSEIGLFKIVSESGTGAGVRRIEALTGKAAFLYLEDIQEKFNTMKSQLKVKSDNQVVDKLTQLQDEEKALLKQLEQRDKEITSLKMGNIEDQVEEINGYKVLVTEVDVPNAKAIRSTMDDFKSKLQDTIIILASNVDDKVSMVATVPKSLTNNVKAGDLIKQMAPIVGGKGGGRPDMAQGGGTQPENISKSLSFIKDYIKNL.

Zn(2+)-binding residues include His-565, His-569, Cys-667, and His-671.

This sequence belongs to the class-II aminoacyl-tRNA synthetase family. Zn(2+) serves as cofactor.

It is found in the cytoplasm. It carries out the reaction tRNA(Ala) + L-alanine + ATP = L-alanyl-tRNA(Ala) + AMP + diphosphate. Its function is as follows. Catalyzes the attachment of alanine to tRNA(Ala) in a two-step reaction: alanine is first activated by ATP to form Ala-AMP and then transferred to the acceptor end of tRNA(Ala). Also edits incorrectly charged Ser-tRNA(Ala) and Gly-tRNA(Ala) via its editing domain. The chain is Alanine--tRNA ligase from Staphylococcus aureus (strain MRSA252).